We begin with the raw amino-acid sequence, 265 residues long: Dehydrogenase RED2 (265 aa).

Residues S6–S26 traverse the membrane as a helical segment. An N-linked (GlcNAc...) asparagine glycan is attached at N45. Residues T47–L67 form a helical membrane-spanning segment. An N-linked (GlcNAc...) asparagine glycan is attached at N74. Residue V89 coordinates NADP(+). N127 is a glycosylation site (N-linked (GlcNAc...) asparagine). Residues D136 and N163 each contribute to the NADP(+) site. An N-linked (GlcNAc...) asparagine glycan is attached at N176. Catalysis depends on S216, which acts as the Proton donor. The NADP(+) site is built by Y228 and K232. Y228 acts as the Proton acceptor in catalysis. K232 functions as the Lowers pKa of active site Tyr in the catalytic mechanism.

Belongs to the short-chain dehydrogenases/reductases (SDR) family.

It localises to the membrane. The enzyme catalyses a primary alcohol + NAD(+) = an aldehyde + NADH + H(+). The catalysed reaction is a secondary alcohol + NAD(+) = a ketone + NADH + H(+). The protein operates within mycotoxin biosynthesis. Its function is as follows. Dehydrogenase; part of the Tox1B locus, one of the 2 loci that mediate the biosynthesis of T-toxin, a family of linear polyketides 37 to 45 carbons in length, of which the major component is 41 carbons, and which leads to high virulence to maize. One of the PKSs (PKS1 or PKS2) could synthesize a precursor, used subsequently by the other PKS as starter unit, to add additional carbons. Variability in the length of the final carbon backbone C35-47 could be achieved by varying the number of condensation cycles, or use of different starter or extender units or might be due to decarboxylation of the penultimate product, catalyzed by DEC1. Additional proteins are required for the biosynthesis of T-toxin, including oxidoreductases RED1, RED2, RED3, LAM1 and OXI1, as well as esterase TOX9. The chain is Dehydrogenase RED2 from Cochliobolus heterostrophus (strain C4 / ATCC 48331 / race T) (Southern corn leaf blight fungus).